A 138-amino-acid chain; its full sequence is Protein FAM136A (138 aa).

Residue A2 is modified to N-acetylalanine. A phosphothreonine mark is found at T124 and T126.

Belongs to the FAM136 family.

This is Protein FAM136A (Fam136a) from Mus musculus (Mouse).